Reading from the N-terminus, the 212-residue chain is Ras-related protein Rab-2A (212 aa).

A2 carries the post-translational modification N-acetylalanine. The tract at residues 2–19 is required for interaction with PRKCI; that stretch reads AYAYLFKYIIIGDTGVGK. GTP is bound by residues G16, V17, G18, K19, S20, C21, and T38. Mg(2+) is bound at residue S20. The short motif at 37-42 is the Switch 1 element; that stretch reads LTIGVE. Residues T38 and D61 each contribute to the Mg(2+) site. The Switch 2 motif lies at 63-72; the sequence is AGQESFRSIT. G64, N119, K120, D122, A150, and K151 together coordinate GTP. The interval 190–212 is disordered; the sequence is QHAATNASHGSNQGGQQAGGGCC. Over residues 201–212 the composition is skewed to gly residues; sequence NQGGQQAGGGCC. Residues C211 and C212 are each lipidated (S-geranylgeranyl cysteine).

This sequence belongs to the small GTPase superfamily. Rab family. In terms of assembly, interacts with PRKCI. Interacts with TRIP11. Interacts (in GTP-bound form) with GARIN1B. Interacts (GTP-bound) with HOPS complex component VPS39; interaction contributes to obtaining a functional HOPS complex that promotes autophagosome-lysosome membrane fusion driven by STX17-SNAP29-VAMP8. Interacts with VPS41. It depends on Mg(2+) as a cofactor. Post-translationally, prenylated. Prenylation is required for association with cellular membranes.

The protein localises to the endoplasmic reticulum-Golgi intermediate compartment membrane. Its subcellular location is the melanosome. It is found in the endoplasmic reticulum membrane. The protein resides in the golgi apparatus membrane. It localises to the cytoplasmic vesicle. The protein localises to the secretory vesicle. Its subcellular location is the acrosome. It is found in the autophagosome membrane. It carries out the reaction GTP + H2O = GDP + phosphate + H(+). With respect to regulation, regulated by guanine nucleotide exchange factors (GEFs) which promote the exchange of bound GDP for free GTP, GTPase activating proteins (GAPs) which increase the GTP hydrolysis activity, and GDP dissociation inhibitors (GDIs) which inhibit the dissociation of the nucleotide from the GTPase. Functionally, the small GTPases Rab are key regulators of intracellular membrane trafficking, from the formation of transport vesicles to their fusion with membranes. Rabs cycle between active GTP-bound and inactive GDP-bound states. In their active state, drive transport of vesicular carriers from donor organelles to acceptor organelles to regulate the membrane traffic that maintains organelle identity and morphology. RAB2A regulates autophagy by promoting autophagosome-lysosome fusion via recruitment of the HOPS endosomal tethering complex; this process involves autophagosomal RAB2A and lysosomal RAB39A recruitment of HOPS subcomplexes VPS39-VPS11 and VPS41-VPS16-VPS18-VPS33A, respectively, which assemble into a functional complex to mediate membrane tethering and SNAREs-driven membrane fusion. Required for protein transport from the endoplasmic reticulum to the Golgi complex. Regulates the compacted morphology of the Golgi. Together with RAB2B, redundantly required for efficient autophagic flux. The sequence is that of Ras-related protein Rab-2A from Mus musculus (Mouse).